We begin with the raw amino-acid sequence, 28 residues long: Kappa-buthitoxin-Tt2b (28 aa).

Disulfide bonds link Cys-2–Cys-24, Cys-7–Cys-20, and Cys-11–Cys-26.

In terms of tissue distribution, expressed by the venom gland.

It is found in the secreted. In terms of biological role, blocks potassium channels Shaker-IR (with inactivation domain removed) and hKv1.2/KCNA2. In Tityus trivittatus (Argentinean scorpion), this protein is Kappa-buthitoxin-Tt2b.